The primary structure comprises 214 residues: Leucyl/phenylalanyl-tRNA--protein transferase (214 aa).

The protein belongs to the L/F-transferase family.

Its subcellular location is the cytoplasm. The enzyme catalyses N-terminal L-lysyl-[protein] + L-leucyl-tRNA(Leu) = N-terminal L-leucyl-L-lysyl-[protein] + tRNA(Leu) + H(+). It catalyses the reaction N-terminal L-arginyl-[protein] + L-leucyl-tRNA(Leu) = N-terminal L-leucyl-L-arginyl-[protein] + tRNA(Leu) + H(+). It carries out the reaction L-phenylalanyl-tRNA(Phe) + an N-terminal L-alpha-aminoacyl-[protein] = an N-terminal L-phenylalanyl-L-alpha-aminoacyl-[protein] + tRNA(Phe). Its function is as follows. Functions in the N-end rule pathway of protein degradation where it conjugates Leu, Phe and, less efficiently, Met from aminoacyl-tRNAs to the N-termini of proteins containing an N-terminal arginine or lysine. In Cereibacter sphaeroides (strain ATCC 17023 / DSM 158 / JCM 6121 / CCUG 31486 / LMG 2827 / NBRC 12203 / NCIMB 8253 / ATH 2.4.1.) (Rhodobacter sphaeroides), this protein is Leucyl/phenylalanyl-tRNA--protein transferase.